The primary structure comprises 335 residues: Fructose-1,6-bisphosphatase class 1 (335 aa).

Residues Glu91, Asp113, Leu115, and Asp116 each contribute to the Mg(2+) site. Residues 116–119, Asn208, and Lys274 each bind substrate; that span reads DGSS. Glu280 contributes to the Mg(2+) binding site.

It belongs to the FBPase class 1 family. In terms of assembly, homotetramer. Mg(2+) is required as a cofactor.

It is found in the cytoplasm. It carries out the reaction beta-D-fructose 1,6-bisphosphate + H2O = beta-D-fructose 6-phosphate + phosphate. It participates in carbohydrate biosynthesis; gluconeogenesis. In Chromobacterium violaceum (strain ATCC 12472 / DSM 30191 / JCM 1249 / CCUG 213 / NBRC 12614 / NCIMB 9131 / NCTC 9757 / MK), this protein is Fructose-1,6-bisphosphatase class 1.